Consider the following 363-residue polypeptide: Peptide chain release factor 1 (363 aa).

Gln-237 carries the post-translational modification N5-methylglutamine. The span at 284–297 (ERAKQQSERSEQRR) shows a compositional bias: basic and acidic residues. The disordered stretch occupies residues 284–306 (ERAKQQSERSEQRRLAVGSGDRS).

It belongs to the prokaryotic/mitochondrial release factor family. In terms of processing, methylated by PrmC. Methylation increases the termination efficiency of RF1.

The protein localises to the cytoplasm. Peptide chain release factor 1 directs the termination of translation in response to the peptide chain termination codons UAG and UAA. The sequence is that of Peptide chain release factor 1 from Halorhodospira halophila (strain DSM 244 / SL1) (Ectothiorhodospira halophila (strain DSM 244 / SL1)).